A 327-amino-acid polypeptide reads, in one-letter code: Methionyl-tRNA formyltransferase (327 aa).

121–124 (SLLP) serves as a coordination point for (6S)-5,6,7,8-tetrahydrofolate.

It belongs to the Fmt family.

The enzyme catalyses L-methionyl-tRNA(fMet) + (6R)-10-formyltetrahydrofolate = N-formyl-L-methionyl-tRNA(fMet) + (6S)-5,6,7,8-tetrahydrofolate + H(+). Attaches a formyl group to the free amino group of methionyl-tRNA(fMet). The formyl group appears to play a dual role in the initiator identity of N-formylmethionyl-tRNA by promoting its recognition by IF2 and preventing the misappropriation of this tRNA by the elongation apparatus. This is Methionyl-tRNA formyltransferase from Burkholderia ambifaria (strain MC40-6).